Consider the following 194-residue polypeptide: Adenylate kinase (194 aa).

10-15 (GAGKGT) contacts ATP. The NMP stretch occupies residues 30 to 59 (STGDMLRAAVAAGTPVGLKAKAVMESGGLV). AMP-binding positions include T31, R36, 57-59 (GLV), 85-88 (GFPR), and Q92. The tract at residues 126 to 142 (NRAAEAKAKGEPVRKDD) is LID. Position 127 (R127) interacts with ATP. AMP is bound by residues R139 and R150. A178 serves as a coordination point for ATP.

It belongs to the adenylate kinase family. Monomer.

The protein resides in the cytoplasm. The catalysed reaction is AMP + ATP = 2 ADP. The protein operates within purine metabolism; AMP biosynthesis via salvage pathway; AMP from ADP: step 1/1. In terms of biological role, catalyzes the reversible transfer of the terminal phosphate group between ATP and AMP. Plays an important role in cellular energy homeostasis and in adenine nucleotide metabolism. This Azorhizobium caulinodans (strain ATCC 43989 / DSM 5975 / JCM 20966 / LMG 6465 / NBRC 14845 / NCIMB 13405 / ORS 571) protein is Adenylate kinase.